A 263-amino-acid polypeptide reads, in one-letter code: Acetyl-coenzyme A carboxylase carboxyl transferase subunit beta (263 aa).

Residues 1–263 form the CoA carboxyltransferase N-terminal domain; the sequence is MDCPSCKVSY…LKETPKKKKA (263 aa). Zn(2+) is bound by residues Cys3, Cys6, Cys22, and Cys25. Residues 3–25 form a C4-type zinc finger; that stretch reads CPSCKVSYDEEVFTDNLMVCPHC.

It belongs to the AccD/PCCB family. Acetyl-CoA carboxylase is a heterohexamer composed of biotin carboxyl carrier protein (AccB), biotin carboxylase (AccC) and two subunits each of ACCase subunit alpha (AccA) and ACCase subunit beta (AccD). The cofactor is Zn(2+).

Its subcellular location is the cytoplasm. The enzyme catalyses N(6)-carboxybiotinyl-L-lysyl-[protein] + acetyl-CoA = N(6)-biotinyl-L-lysyl-[protein] + malonyl-CoA. It functions in the pathway lipid metabolism; malonyl-CoA biosynthesis; malonyl-CoA from acetyl-CoA: step 1/1. Component of the acetyl coenzyme A carboxylase (ACC) complex. Biotin carboxylase (BC) catalyzes the carboxylation of biotin on its carrier protein (BCCP) and then the CO(2) group is transferred by the transcarboxylase to acetyl-CoA to form malonyl-CoA. The polypeptide is Acetyl-coenzyme A carboxylase carboxyl transferase subunit beta (Treponema denticola (strain ATCC 35405 / DSM 14222 / CIP 103919 / JCM 8153 / KCTC 15104)).